Consider the following 288-residue polypeptide: Small ribosomal subunit protein uS3 (288 aa).

The KH type-2 domain occupies 38-106 (IRRMMSKGLE…QVQLNIIEVK (69 aa)). A disordered region spans residues 209–288 (PGRETPAEAP…TQPAETQQEG (80 aa)). Positions 219–232 (SRPRRERGDRSERP) are enriched in basic and acidic residues. Residues 249-264 (AGRAAATTIAQAAETP) are compositionally biased toward low complexity. The span at 277 to 288 (AATQPAETQQEG) shows a compositional bias: polar residues.

The protein belongs to the universal ribosomal protein uS3 family. In terms of assembly, part of the 30S ribosomal subunit. Forms a tight complex with proteins S10 and S14.

In terms of biological role, binds the lower part of the 30S subunit head. Binds mRNA in the 70S ribosome, positioning it for translation. The protein is Small ribosomal subunit protein uS3 of Salinispora arenicola (strain CNS-205).